A 68-amino-acid polypeptide reads, in one-letter code: Beta-defensin 1 (68 aa).

Residues 1–21 (MRTSYLLLFTLCLLLSEMASG) form the signal peptide. A propeptide spanning residues 22 to 32 (GNFLTGLGHRS) is cleaved from the precursor. 3 cysteine pairs are disulfide-bonded: Cys37-Cys66, Cys44-Cys59, and Cys49-Cys67.

The protein belongs to the beta-defensin family. As to quaternary structure, monomer. Homodimer.

It is found in the secreted. The protein resides in the membrane. Functionally, has bactericidal activity. May act as a ligand for C-C chemokine receptor CCR6. Positively regulates the sperm motility and bactericidal activity in a CCR6-dependent manner. Binds to CCR6 and triggers Ca2+ mobilization in the sperm which is important for its motility. This is Beta-defensin 1 (DEFB1) from Pongo pygmaeus (Bornean orangutan).